The following is a 99-amino-acid chain: Malonate decarboxylase acyl carrier protein (99 aa).

S25 carries the O-(phosphoribosyl dephospho-coenzyme A)serine modification.

This sequence belongs to the MdcC family. In terms of processing, covalently binds the prosthetic group of malonate decarboxylase.

The protein localises to the cytoplasm. Its function is as follows. Subunit of malonate decarboxylase, it is an acyl carrier protein to which acetyl and malonyl thioester residues are bound via a 2'-(5''-phosphoribosyl)-3'-dephospho-CoA prosthetic group and turn over during the catalytic mechanism. This chain is Malonate decarboxylase acyl carrier protein, found in Pseudomonas syringae pv. tomato (strain ATCC BAA-871 / DC3000).